Here is a 481-residue protein sequence, read N- to C-terminus: Cys-Gly metallodipeptidase DUG1 (481 aa).

Zn(2+) is bound at residue histidine 102. Aspartate 104 is a catalytic residue. Aspartate 137 contributes to the Zn(2+) binding site. Glutamate 171 acts as the Proton acceptor in catalysis. Zn(2+)-binding residues include glutamate 172, aspartate 200, and histidine 450. At serine 451 the chain carries Phosphoserine.

This sequence belongs to the peptidase M20A family. In terms of assembly, homodimer. Component of the GSH degradosomal complex composed of at least DUG1, DUG2 and DUG3. It depends on Zn(2+) as a cofactor. The cofactor is Mn(2+).

Its subcellular location is the cytoplasm. It is found in the mitochondrion. In terms of biological role, catalytic component of the GSH degradosomal complex involved in the degradation of glutathione (GSH) and other peptides containing a gamma-glu-X bond. Also functions in a DUG2-DUG3-independent manner as a dipeptidase with high specificity for Cys-Gly and no activity toward tri- or tetrapeptides. The polypeptide is Cys-Gly metallodipeptidase DUG1 (DUG1) (Saccharomyces cerevisiae (strain ATCC 204508 / S288c) (Baker's yeast)).